A 79-amino-acid chain; its full sequence is MSEFWHKLGCCVVEKPQPKKKRRRIDRTMIGEPMNFVHLTHIGSGEMGAGDGLAMTGAVQEQMRSKGNRDRPWSNSRGL.

Residues cysteine 10 and cysteine 11 are each lipidated (S-palmitoyl cysteine). A CRIB domain is found at 30 to 43; that stretch reads IGEPMNFVHLTHIG. The interval 48 to 79 is disordered; sequence GAGDGLAMTGAVQEQMRSKGNRDRPWSNSRGL. Residues 63-72 are compositionally biased toward basic and acidic residues; sequence MRSKGNRDRP.

This sequence belongs to the CDC42SE/SPEC family. Interacts with CDC42 (in GTP-bound form). Interacts weakly with RAC1 and not at all with RHOA.

The protein resides in the cytoplasm. The protein localises to the cytoskeleton. It localises to the cell membrane. Its function is as follows. Probably involved in the organization of the actin cytoskeleton by acting downstream of CDC42, inducing actin filament assembly. Alters CDC42-induced cell shape changes. In activated T-cells, may play a role in CDC42-mediated F-actin accumulation at the immunological synapse. May play a role in early contractile events in phagocytosis in macrophages. In Bos taurus (Bovine), this protein is CDC42 small effector protein 1 (CDC42SE1).